The sequence spans 784 residues: Ribosome biogenesis protein BOP1 homolog (784 aa).

The span at 1-11 (MTKKLALKRKG) shows a compositional bias: basic residues. The segment at 1–159 (MTKKLALKRK…DSDTSDEEDI (159 aa)) is disordered. Composition is skewed to acidic residues over residues 27 to 36 (SENEEEEEDL), 45 to 54 (EDSTDDEGID), 62 to 73 (SEELQFESDEEG), and 84 to 111 (AEED…EDEE). A compositionally biased stretch (basic and acidic residues) spans 112 to 123 (KDSKLKQSDDKP). Residues 124–133 (SSSGAASKKA) show a composition bias toward low complexity. Residues 138 to 148 (LSKRDTSKPEY) are compositionally biased toward basic and acidic residues. Over residues 149–158 (QDSDTSDEED) the composition is skewed to acidic residues. 7 WD repeats span residues 445–486 (GHTD…RTIE), 488–526 (DEVV…KVLV), 570–612 (THFK…SQIP), 615–653 (KSKG…LVKK), 656–695 (TNSK…KPYQ), 699–738 (LHRN…DLLQ), and 754–784 (RDEF…RLYT).

This sequence belongs to the WD repeat BOP1/ERB1 family.

The protein localises to the nucleus. It is found in the nucleolus. It localises to the nucleoplasm. Its function is as follows. Required for maturation of ribosomal RNAs and formation of the large ribosomal subunit. This Drosophila erecta (Fruit fly) protein is Ribosome biogenesis protein BOP1 homolog.